The sequence spans 290 residues: MPLLTLYLLLFWLSGYSIVTQITGPTTVNGLERGSLTVQCVYRSGWETYLKWWCRGAIWRDCKILVKTSGSEQEVKRDRVSIKDNQKNRTFTVTMEDLMKTDADTYWCGIEKTGNDLGVTVQVTIDPAPVTQEETSSSPTLTGHHLDNRHKLLKLSVLLPLIFTILLLLLVAASLLAWRMMKYQQKAAGMSPEQVLQPLEGDLCYADLTLQLAGTSPQKATTKLSSAQVDQVEVEYVTMASLPKEDISYASLTLGAEDQEPTYCNMGHLSSHLPGRGPEEPTEYSTISRP.

Residues 1-19 (MPLLTLYLLLFWLSGYSIV) form the signal peptide. One can recognise an Ig-like V-type domain in the interval 20-126 (TQITGPTTVN…LGVTVQVTID (107 aa)). Over 20-156 (TQITGPTTVN…DNRHKLLKLS (137 aa)) the chain is Extracellular. 2 disulfides stabilise this stretch: Cys40–Cys108 and Cys54–Cys62. Residue Asn88 is glycosylated (N-linked (GlcNAc...) asparagine). A helical membrane pass occupies residues 157–177 (VLLPLIFTILLLLLVAASLLA). Residues 178 to 290 (WRMMKYQQKA…PTEYSTISRP (113 aa)) lie on the Cytoplasmic side of the membrane. Residues 267–290 (GHLSSHLPGRGPEEPTEYSTISRP) are disordered.

The protein belongs to the CD300 family. Interacts with PTPN6/SHP-1 in a tyrosine phosphorylation dependent manner. Interacts with IL4R. Phosphorylated on tyrosine. In terms of tissue distribution, highly expressed in spleen, peripheral blood leukocyte and monocyte, and lung. Weakly expressed in thymus, heart, brain, placenta, liver, skeletal muscle, kidney, pancreas, prostate, testis, ovary, small intestine or colon. Expressed selectively in monocytes and monocyte-related cells.

The protein localises to the cell membrane. Functionally, acts as an inhibitory receptor for myeloid cells and mast cells. Positively regulates the phagocytosis of apoptotic cells (efferocytosis) via phosphatidylserine (PS) recognition; recognizes and binds PS as a ligand which is expressed on the surface of apoptotic cells. Plays an important role in the maintenance of immune homeostasis, by promoting macrophage-mediated efferocytosis and by inhibiting dendritic cell-mediated efferocytosis. Negatively regulates Fc epsilon receptor-dependent mast cell activation and allergic responses via binding to ceramide and sphingomyelin which act as ligands. May act as a coreceptor for interleukin 4 (IL-4). Associates with and regulates IL-4 receptor alpha-mediated responses by augmenting IL-4- and IL-13-induced signaling. Negatively regulates the Toll-like receptor (TLR) signaling mediated by MYD88 and TRIF through activation of PTPN6/SHP-1 and PTPN11/SHP-2. Inhibits osteoclast formation. Induces macrophage cell death upon engagement. The polypeptide is CMRF35-like molecule 1 (CD300LF) (Homo sapiens (Human)).